Here is a 242-residue protein sequence, read N- to C-terminus: MSPRERQAALVLFSGGQDSSVCLAWALERYDRVETVGFDYGQRHAIEMQARQAVRREVAARFPQWAERLGEDHVLDIRSFGAVAQSALTADRAIEMTERGLPSTFVPGRNLVFLTYAAALADRRGIDALVGGMCETDFSGYPDCRRDTLDAMQAALNLGMDRNFRIETPLMWLTKAQTWGLSKQLGGEALVSLIVEESHTCYQGERGQLHAWGHGCGTCPACELREKGYVEWDMAGREALAQ.

An ATP-binding site is contributed by Phe-13 to Leu-23. Zn(2+) is bound by residues Cys-201, Cys-216, Cys-219, and Cys-222.

It belongs to the QueC family. The cofactor is Zn(2+).

It catalyses the reaction 7-carboxy-7-deazaguanine + NH4(+) + ATP = 7-cyano-7-deazaguanine + ADP + phosphate + H2O + H(+). The protein operates within purine metabolism; 7-cyano-7-deazaguanine biosynthesis. In terms of biological role, catalyzes the ATP-dependent conversion of 7-carboxy-7-deazaguanine (CDG) to 7-cyano-7-deazaguanine (preQ(0)). This chain is 7-cyano-7-deazaguanine synthase, found in Caulobacter vibrioides (strain ATCC 19089 / CIP 103742 / CB 15) (Caulobacter crescentus).